Consider the following 471-residue polypeptide: Ribulose bisphosphate carboxylase large chain (471 aa).

Lysine 5 carries the N6,N6,N6-trimethyllysine modification. Asparagine 114 and threonine 164 together coordinate substrate. Lysine 166 acts as the Proton acceptor in catalysis. Lysine 168 is a substrate binding site. Residues lysine 192, aspartate 194, and glutamate 195 each contribute to the Mg(2+) site. At lysine 192 the chain carries N6-carboxylysine. Histidine 285 acts as the Proton acceptor in catalysis. Substrate is bound by residues arginine 286, histidine 318, and serine 370.

The protein belongs to the RuBisCO large chain family. Type I subfamily. Heterohexadecamer of 8 large chains and 8 small chains; disulfide-linked. The disulfide link is formed within the large subunit homodimers. It depends on Mg(2+) as a cofactor. Post-translationally, the disulfide bond which can form in the large chain dimeric partners within the hexadecamer appears to be associated with oxidative stress and protein turnover.

It is found in the plastid. It localises to the chloroplast. The catalysed reaction is 2 (2R)-3-phosphoglycerate + 2 H(+) = D-ribulose 1,5-bisphosphate + CO2 + H2O. It catalyses the reaction D-ribulose 1,5-bisphosphate + O2 = 2-phosphoglycolate + (2R)-3-phosphoglycerate + 2 H(+). Its function is as follows. RuBisCO catalyzes two reactions: the carboxylation of D-ribulose 1,5-bisphosphate, the primary event in carbon dioxide fixation, as well as the oxidative fragmentation of the pentose substrate in the photorespiration process. Both reactions occur simultaneously and in competition at the same active site. The sequence is that of Ribulose bisphosphate carboxylase large chain from Strychnos nux-vomica (Poison nut).